The chain runs to 279 residues: Large ribosomal subunit protein uL2 (279 aa).

The disordered stretch occupies residues 227 to 279 (GVAMNPVDHPMGGGEGKTSGGRHPVSPWGFPTKGKKTRDPNKLSSKFIKSKKR).

It belongs to the universal ribosomal protein uL2 family. Part of the 50S ribosomal subunit. Forms a bridge to the 30S subunit in the 70S ribosome.

One of the primary rRNA binding proteins. Required for association of the 30S and 50S subunits to form the 70S ribosome, for tRNA binding and peptide bond formation. It has been suggested to have peptidyltransferase activity; this is somewhat controversial. Makes several contacts with the 16S rRNA in the 70S ribosome. The chain is Large ribosomal subunit protein uL2 from Neorickettsia sennetsu (strain ATCC VR-367 / Miyayama) (Ehrlichia sennetsu).